Consider the following 251-residue polypeptide: Flap endonuclease Xni (251 aa).

The disordered stretch occupies residues 51–72; it reads EDDRSDSWRHQSLPDYKAGRSP. Residue aspartate 104 participates in Mg(2+) binding. The region spanning 160-249 is the 5'-3' exonuclease domain; it reads VLPHQLPDYW…LSGNLQQLRL (90 aa). K(+)-binding residues include leucine 171, alanine 172, proline 180, valine 182, and isoleucine 185. The tract at residues 184–189 is interaction with DNA; it reads GIGAKT.

The protein belongs to the Xni family. The cofactor is Mg(2+). K(+) is required as a cofactor.

Has flap endonuclease activity. During DNA replication, flap endonucleases cleave the 5'-overhanging flap structure that is generated by displacement synthesis when DNA polymerase encounters the 5'-end of a downstream Okazaki fragment. The protein is Flap endonuclease Xni of Yersinia enterocolitica serotype O:8 / biotype 1B (strain NCTC 13174 / 8081).